The following is a 335-amino-acid chain: Phosphate acyltransferase (335 aa).

The protein belongs to the PlsX family. As to quaternary structure, homodimer. Probably interacts with PlsY.

It is found in the cytoplasm. The enzyme catalyses a fatty acyl-[ACP] + phosphate = an acyl phosphate + holo-[ACP]. It functions in the pathway lipid metabolism; phospholipid metabolism. Functionally, catalyzes the reversible formation of acyl-phosphate (acyl-PO(4)) from acyl-[acyl-carrier-protein] (acyl-ACP). This enzyme utilizes acyl-ACP as fatty acyl donor, but not acyl-CoA. The chain is Phosphate acyltransferase from Clostridium botulinum (strain Langeland / NCTC 10281 / Type F).